Reading from the N-terminus, the 249-residue chain is Pleckstrin homology domain-containing family F member 2 (249 aa).

Residue S16 is modified to Phosphoserine. The region spanning 35 to 131 is the PH domain; it reads VLIGEGVLTK…WMNHINKCVT (97 aa). At K44 the chain carries N6-acetyllysine. The FYVE-type zinc-finger motif lies at 152 to 212; the sequence is DSEATVCMRC…ICDFCYDLLS (61 aa). 8 residues coordinate Zn(2+): C158, C161, C175, C178, C183, C186, C204, and C207. A compositionally biased stretch (polar residues) spans 221 to 233; sequence PARSDSYSQSLKS. A disordered region spans residues 221 to 249; it reads PARSDSYSQSLKSPLNDMSDDDDDDDSSD. Residues 238 to 249 show a composition bias toward acidic residues; sequence MSDDDDDDDSSD. S239 and S248 each carry phosphoserine.

In terms of assembly, may interact with EEA1. Expressed in placenta, ovary and small intestine, as well as in heart and pancreas. Also expressed in peripheral blood mononuclear cells and dendritic cells.

It is found in the early endosome membrane. The protein localises to the endoplasmic reticulum. Its function is as follows. May play a role in early endosome fusion upstream of RAB5, hence regulating receptor trafficking and fluid-phase transport. Enhances cellular sensitivity to TNF-induced apoptosis. This chain is Pleckstrin homology domain-containing family F member 2 (PLEKHF2), found in Homo sapiens (Human).